Here is a 250-residue protein sequence, read N- to C-terminus: DNA repair protein RecO (250 aa).

It belongs to the RecO family.

In terms of biological role, involved in DNA repair and RecF pathway recombination. This chain is DNA repair protein RecO, found in Rhodospirillum centenum (strain ATCC 51521 / SW).